Here is a 757-residue protein sequence, read N- to C-terminus: Probable ubiquitin carboxyl-terminal hydrolase MINDY-4 (757 aa).

Disordered stretches follow at residues 152 to 173 (FVSS…GETP) and 190 to 334 (SLDV…LPGG). Positions 190–201 (SLDVKRMGENSR) are enriched in basic and acidic residues. Ser219 and Ser223 each carry phosphoserine. Over residues 232–242 (SSPSSSSTQPQ) the composition is skewed to low complexity. The span at 254–277 (CTQQDILASSNSSPSRTSLGQLSE) shows a compositional bias: polar residues. Phosphoserine is present on Ser289. Residues 299 to 310 (PPWDRARPRDPS) are compositionally biased toward basic and acidic residues. Catalysis depends on Cys456, which acts as the Nucleophile. The Proton acceptor role is filled by His677.

This sequence belongs to the MINDY deubiquitinase family. FAM188 subfamily.

The enzyme catalyses Thiol-dependent hydrolysis of ester, thioester, amide, peptide and isopeptide bonds formed by the C-terminal Gly of ubiquitin (a 76-residue protein attached to proteins as an intracellular targeting signal).. Probable hydrolase that can remove 'Lys-48'-linked conjugated ubiquitin from proteins. The polypeptide is Probable ubiquitin carboxyl-terminal hydrolase MINDY-4 (Homo sapiens (Human)).